A 466-amino-acid polypeptide reads, in one-letter code: cGMP-specific 3',5'-cGMP phosphodiesterase 3 (466 aa).

Residues 1–120 show a composition bias toward low complexity; the sequence is MAPQQNIMKQ…NSNNNNSNNN (120 aa). Residues 1-150 form a disordered region; sequence MAPQQNIMKQ…NNNKIRGYND (150 aa). Residues 123–134 are compositionally biased toward acidic residues; it reads DDEEEEGDDEDN. Positions 135–150 are enriched in low complexity; that stretch reads NNNNNSNNNKIRGYND. In terms of domain architecture, PDEase spans 137 to 458; that stretch reads NNNSNNNKIR…EIWSNNGSSS (322 aa). Residue His213 is the Proton donor of the active site. 4 residues coordinate a divalent metal cation: His217, His253, Asp254, and Asp364.

The protein belongs to the cyclic nucleotide phosphodiesterase family. A divalent metal cation is required as a cofactor.

Its subcellular location is the cytoplasm. The protein localises to the cytosol. It carries out the reaction 3',5'-cyclic GMP + H2O = GMP + H(+). Inhibited by 3-isobutyl-1-methylxanthine (IBMX). Functionally, phosphodiesterase specific for cGMP, which is not activated by cGMP. Involved in the degradation of intracellular cGMP. The polypeptide is cGMP-specific 3',5'-cGMP phosphodiesterase 3 (pde3) (Dictyostelium discoideum (Social amoeba)).